We begin with the raw amino-acid sequence, 185 residues long: Ribosome-recycling factor (185 aa).

It belongs to the RRF family.

Its subcellular location is the cytoplasm. Its function is as follows. Responsible for the release of ribosomes from messenger RNA at the termination of protein biosynthesis. May increase the efficiency of translation by recycling ribosomes from one round of translation to another. The chain is Ribosome-recycling factor from Pseudothermotoga lettingae (strain ATCC BAA-301 / DSM 14385 / NBRC 107922 / TMO) (Thermotoga lettingae).